We begin with the raw amino-acid sequence, 240 residues long: 2,3,4,5-tetrahydropyridine-2,6-dicarboxylate N-acetyltransferase (240 aa).

The protein belongs to the transferase hexapeptide repeat family. DapH subfamily.

The catalysed reaction is (S)-2,3,4,5-tetrahydrodipicolinate + acetyl-CoA + H2O = L-2-acetamido-6-oxoheptanedioate + CoA. Its pathway is amino-acid biosynthesis; L-lysine biosynthesis via DAP pathway; LL-2,6-diaminopimelate from (S)-tetrahydrodipicolinate (acetylase route): step 1/3. In terms of biological role, catalyzes the transfer of an acetyl group from acetyl-CoA to tetrahydrodipicolinate. This is 2,3,4,5-tetrahydropyridine-2,6-dicarboxylate N-acetyltransferase from Shouchella clausii (strain KSM-K16) (Alkalihalobacillus clausii).